Here is a 164-residue protein sequence, read N- to C-terminus: FMN reductase (NADH) RutF (164 aa).

The protein belongs to the non-flavoprotein flavin reductase family. RutF subfamily.

The catalysed reaction is FMNH2 + NAD(+) = FMN + NADH + 2 H(+). Its function is as follows. Catalyzes the reduction of FMN to FMNH2 which is used to reduce pyrimidine by RutA via the Rut pathway. The polypeptide is FMN reductase (NADH) RutF (Escherichia coli O150:H5 (strain SE15)).